Here is a 249-residue protein sequence, read N- to C-terminus: Ubiquinone biosynthesis O-methyltransferase (249 aa).

The tract at residues 1–21 (MIPEVSNEASQPAAHRQENVD) is disordered. Residues R52, G72, D93, and M137 each coordinate S-adenosyl-L-methionine.

This sequence belongs to the methyltransferase superfamily. UbiG/COQ3 family.

The enzyme catalyses a 3-demethylubiquinol + S-adenosyl-L-methionine = a ubiquinol + S-adenosyl-L-homocysteine + H(+). It catalyses the reaction a 3-(all-trans-polyprenyl)benzene-1,2-diol + S-adenosyl-L-methionine = a 2-methoxy-6-(all-trans-polyprenyl)phenol + S-adenosyl-L-homocysteine + H(+). Its pathway is cofactor biosynthesis; ubiquinone biosynthesis. O-methyltransferase that catalyzes the 2 O-methylation steps in the ubiquinone biosynthetic pathway. The protein is Ubiquinone biosynthesis O-methyltransferase of Sodalis glossinidius (strain morsitans).